Here is a 276-residue protein sequence, read N- to C-terminus: WIMGHMVNKIEQINEFLDLGANSIEVDIAFDELGYPEYTYHGVPCDCKRYCTKSEKIDDFIEALSAATTPGNPKFRKELTLVVFDLKTGGFDASRMYKSGKAFAELIQFSYWKGSDDAGRAYIVLSLPKLDHYEFIKAFREHFDTSTFKNLLEERVGYDFSGNEDMGLTRVVLNKAGVNDREHVWQGDGITNCILRSLDRVKAAVAIRDSATGYINKVCFWTIQAYSSVRDALNAEVDGIMTNEPGVIANVLKEDAFKDRFRLATYRDNPWETFKR.

The active site involves histidine 5. Residues glutamate 25 and aspartate 27 each coordinate Mg(2+). The active-site Nucleophile is the histidine 41. Disulfide bonds link cysteine 45–cysteine 51 and cysteine 47–cysteine 193. Aspartate 85 contributes to the Mg(2+) binding site.

This sequence belongs to the arthropod phospholipase D family. Class II subfamily. The cofactor is Mg(2+). Expressed by the venom gland.

It is found in the secreted. It carries out the reaction an N-(acyl)-sphingosylphosphocholine = an N-(acyl)-sphingosyl-1,3-cyclic phosphate + choline. The enzyme catalyses an N-(acyl)-sphingosylphosphoethanolamine = an N-(acyl)-sphingosyl-1,3-cyclic phosphate + ethanolamine. It catalyses the reaction a 1-acyl-sn-glycero-3-phosphocholine = a 1-acyl-sn-glycero-2,3-cyclic phosphate + choline. The catalysed reaction is a 1-acyl-sn-glycero-3-phosphoethanolamine = a 1-acyl-sn-glycero-2,3-cyclic phosphate + ethanolamine. Its function is as follows. Dermonecrotic toxins cleave the phosphodiester linkage between the phosphate and headgroup of certain phospholipids (sphingolipid and lysolipid substrates), forming an alcohol (often choline) and a cyclic phosphate. This toxin acts on sphingomyelin (SM). It may also act on ceramide phosphoethanolamine (CPE), lysophosphatidylcholine (LPC) and lysophosphatidylethanolamine (LPE), but not on lysophosphatidylserine (LPS), and lysophosphatidylglycerol (LPG). It acts by transphosphatidylation, releasing exclusively cyclic phosphate products as second products. Induces dermonecrosis, hemolysis, increased vascular permeability, edema, inflammatory response, and platelet aggregation. This is Dermonecrotic toxin LlSicTox-alphaIV2i from Loxosceles laeta (South American recluse spider).